The sequence spans 170 residues: TFIIB-type zinc finger protein (170 aa).

Residues 1–30 (MECPVCGSNEIVWDNKNGEVVCSNCGIIID) form a TFIIB-type zinc finger. Positions 3, 6, 22, and 25 each coordinate Zn(2+).

It belongs to the TFIIB family. Requires Zn(2+) as cofactor.

In Saccharolobus shibatae (strain ATCC 51178 / DSM 5389 / JCM 8931 / NBRC 15437 / B12) (Sulfolobus shibatae), this protein is TFIIB-type zinc finger protein.